Here is an 853-residue protein sequence, read N- to C-terminus: MAEPVGDLVVDLSLDAARFDEQMARVRRHFSGTESDAKKTAAVVEQSLSRQALAAQKAGISVGQYKAAMRMLPAQFTDVATQLAGGQSPWLILLQQGGQVKDSFGGMIPMFRGLAGAITLPMVGATSLAVATGALAYAWYQGNSTLSDFNKTLVLSGNQAGLTADRMLVLSRAGQAAGLTFNQTSESLSALVKAGVSGEAQIASISQSVARFSSASGVEVDKVAEAFGKLTTDPTSGLTAMARQFHNVSAEQIAYVAQLQRSGDEAGALQAANEAATKGFDDQTRRLKENMGTLETWADRTARAFKSMWDAVLDIGRPDTAQEMLIKAEAAYKKADDIWNLRKDDYFVNDEARARYWDDREKARLALEAARKKAEQQTQQDKNAQQQSDTEASRLKYTEEAQKAYERLQTPLEKYTARQEELNKALKDGKILQADYNTLMAAAKKDYEATLKKPKQSSVKVSAGDRQEDSAHAALLTLQAELRTLEKHAGANEKISQQRRDLWKAESQFAVLEEAAQRRQLSAQEKSLLAHKDETLEYKRQLAALGDKVTYQERLNALAQQADKFAQQQRAKRAAIDAKSRGLTDRQAEREATEQRLKEQYGDNPLALNNVMSEQKKTWAAEDQLRGNWMAGLKSGWSEWEESATDSMSQVKSAATQTFDGIAQNMAAMLTGSEQNWRSFTRSVLSMMTEILLKQAMVGIVGSIGSAIGGAVGGGASASGGTAIQAAAAKFHFATGGFTGTGGKYEPAGIVHRGEFVFTKEATSRIGVGNLYRLMRGYATGGYVGTPGSMADSRSQASGTFEQNNHVVINNDGTNGQIGPAALKAVYDMARKGARDEIQTQMRDGGLFSGGGR.

Coiled coils occupy residues 360–387 (REKARLALEAARKKAEQQTQQDKNAQQQ) and 548–568 (KVTYQERLNALAQQADKFAQQ). A disordered region spans residues 370–393 (ARKKAEQQTQQDKNAQQQSDTEAS). The span at 376-387 (QQTQQDKNAQQQ) shows a compositional bias: low complexity.

The protein belongs to the Lambdavirus tape measure protein family. As to quaternary structure, interacts with the tail initiator complex presumably through its C-terminus domain. Interacts with the tail assembly protein G. Interacts with the tail assembly protein GT. Post-translationally, cleaved into mature protein H* by an unidentified protease.

It localises to the virion. Functionally, serves as a ruler that controls the length of tail by stopping the tail tube polymerization and is probably released from the tail shaft during infection to facilitate DNA translocation into the host cell. Assembles into a multimeric linear form possibly stabilized by the covering tail assembly proteins G and GT. Its C-terminus fixes the tail tip complex (J, I, L, K), thereby forming the tail assembly initiator complex. Tail tube proteins polymerize around tape measure protein, displacing the tail assembly protein G and GT. When the tail reaches the length specified by the tape measure protein, it stops and becomes capped by the tail terminator protein. Upon tail assembly, tape measure protein is cleaved into a form called H*, that plays a role later during virion entry in a new cell. Once assembled, the virion is released and can infect new cells by binding to the entry receptor LambB. After opening of a pore on the external membrane, the entry protein H* protein is probably released in the periplasmic space for successful DNA injection. The polypeptide is Tape measure protein (Escherichia phage lambda (Bacteriophage lambda)).